The sequence spans 1703 residues: Pecanex-like protein 1 (1703 aa).

A run of 2 helical transmembrane segments spans residues 31-53 (VNAL…YMAL) and 57-74 (MVIV…FLLL). Positions 91 to 100 (VEHQTRESKG) are enriched in basic and acidic residues. A disordered region spans residues 91 to 126 (VEHQTRESKGSRGGTGGANDPVTRREDSNGLGDPGG). The N-linked (GlcNAc...) asparagine glycan is linked to Asn256. Helical transmembrane passes span 416-438 (VLAV…HGFF), 477-499 (AYSR…YGSL), and 525-547 (LVIV…QVNT). Asn564 carries an N-linked (GlcNAc...) asparagine glycan. 4 consecutive transmembrane segments (helical) span residues 569 to 591 (LLSA…CFCY), 603 to 622 (IPVL…YHLS), 675 to 697 (LIVC…FIAL), and 704 to 721 (VLYG…YLLP). N-linked (GlcNAc...) asparagine glycosylation is found at Asn988, Asn1129, and Asn1391. 2 disordered regions span residues 1475-1556 (VQSG…HSIP) and 1577-1598 (TDPL…PTHA). Low complexity-rich tracts occupy residues 1485-1510 (ARAS…RTST) and 1518-1556 (RSST…HSIP). The segment covering 1582 to 1591 (QHHHPHHHPQ) has biased composition (basic residues). Asn1622 carries N-linked (GlcNAc...) asparagine glycosylation.

It belongs to the pecanex family.

The protein localises to the membrane. This is Pecanex-like protein 1 from Takifugu rubripes (Japanese pufferfish).